The following is a 263-amino-acid chain: Ret finger protein-like 4B (263 aa).

The RING-type zinc finger occupies 11–53 (CPVCLDFFSCSISLSCTHVFCFDCIQRYILENHDFRAMCPLCR). The B30.2/SPRY domain maps to 76–263 (HNSRLEQSLH…ESGNVLTICP (188 aa)).

This is Ret finger protein-like 4B (RFPL4B) from Homo sapiens (Human).